A 168-amino-acid chain; its full sequence is Protein GRE1 (168 aa).

The segment at 1–168 (MSNLLNKFAD…DDDSGNQGVW (168 aa)) is disordered. Basic and acidic residues-rich tracts occupy residues 8–20 (FADK…HDER) and 27–43 (DQTR…REFR). 2 stretches are compositionally biased toward polar residues: residues 56-81 (NQGN…GNDF) and 120-144 (TSGQ…SNIG).

The protein resides in the cytoplasm. The protein is Protein GRE1 (GRE1) of Saccharomyces cerevisiae (strain ATCC 204508 / S288c) (Baker's yeast).